Reading from the N-terminus, the 779-residue chain is Probable ATP-dependent RNA helicase DHX40 (779 aa).

The disordered stretch occupies residues 1 to 28 (MSRFPAVAGRAPRRQEEGERSRDLQEER). Residues 13-28 (RRQEEGERSRDLQEER) show a composition bias toward basic and acidic residues. The Helicase ATP-binding domain occupies 63-231 (IQAVRDNSFL…FGNCPIFDIP (169 aa)). 76 to 83 (GNTGSGKT) provides a ligand contact to ATP. Positions 173–176 (DEAH) match the DEAH box motif. The region spanning 263 to 442 (TMDIHLNEMA…SVVLTLKCLA (180 aa)) is the Helicase C-terminal domain. The segment at 737–779 (SKDVLKKMQRRNDDKSISDARARFLERKQQRTQDHSDTRKETG) is disordered.

Belongs to the DEAD box helicase family. DEAH subfamily. In terms of tissue distribution, ubiquitously expressed.

It catalyses the reaction ATP + H2O = ADP + phosphate + H(+). Functionally, probable ATP-dependent RNA helicase. This is Probable ATP-dependent RNA helicase DHX40 (DHX40) from Homo sapiens (Human).